Reading from the N-terminus, the 241-residue chain is Octanoyltransferase (241 aa).

Positions 50–238 (KIAHEQVWLL…AFEQIFGPTI (189 aa)) constitute a BPL/LPL catalytic domain. Substrate is bound by residues 89–96 (RGGEFTYH), 169–171 (AIG), and 182–184 (GIS). The active-site Acyl-thioester intermediate is Cys200.

It belongs to the LipB family.

It localises to the cytoplasm. It catalyses the reaction octanoyl-[ACP] + L-lysyl-[protein] = N(6)-octanoyl-L-lysyl-[protein] + holo-[ACP] + H(+). It functions in the pathway protein modification; protein lipoylation via endogenous pathway; protein N(6)-(lipoyl)lysine from octanoyl-[acyl-carrier-protein]: step 1/2. Its function is as follows. Catalyzes the transfer of endogenously produced octanoic acid from octanoyl-acyl-carrier-protein onto the lipoyl domains of lipoate-dependent enzymes. Lipoyl-ACP can also act as a substrate although octanoyl-ACP is likely to be the physiological substrate. In Bartonella bacilliformis (strain ATCC 35685 / KC583 / Herrer 020/F12,63), this protein is Octanoyltransferase.